A 159-amino-acid chain; its full sequence is Protein RseC (159 aa).

Over 1–72 (MIKEWATVVS…QKVELGIAEG (72 aa)) the chain is Cytoplasmic. Residues 73–95 (SLLSSALLVYMSPLVGLFLIASL) traverse the membrane as a helical segment. Over 96 to 98 (FQL) the chain is Periplasmic. Residues 99 to 121 (LFASDVAALCGAILGGIGGFLIA) form a helical membrane-spanning segment. The Cytoplasmic portion of the chain corresponds to 122-159 (RGYSRKFAARAEWQPIILSVALPPGLVRFETSSEDASQ).

Belongs to the RseC family.

It localises to the cell inner membrane. May play a role in reduction of the SoxR iron-sulfur cluster. May work together with the RsxABCDGE complex. The sequence is that of Protein RseC from Escherichia coli (strain K12).